The sequence spans 428 residues: Glutamine synthetase, chloroplastic (428 aa).

A chloroplast-targeting transit peptide spans 1–48 (MAQAVVPAMQCQVGAVRARPAAAAAAAGGRVWGVRRTGRGTSGFRVMA). Residues 75-155 (IIAEYIWVGG…VMCDTYTPAG (81 aa)) enclose the GS beta-grasp domain. The tract at residues 95-120 (TISKPVEDPSELPKWNYDGSSTGQAP) is disordered. The GS catalytic domain occupies 159 to 428 (PTNKRNRAAQ…LAAKKLALKV (270 aa)).

It belongs to the glutamine synthetase family. In terms of assembly, homooctamer.

Its subcellular location is the plastid. The protein localises to the chloroplast. It carries out the reaction L-glutamate + NH4(+) + ATP = L-glutamine + ADP + phosphate + H(+). In terms of biological role, light-modulated chloroplastic glutamine synthetase, encoded by a nuclear gene and expressed primarily in leaves, and which is responsible for the reassimilation of the ammonia generated by photorespiration. This chain is Glutamine synthetase, chloroplastic, found in Oryza sativa subsp. japonica (Rice).